Reading from the N-terminus, the 248-residue chain is 1-(5-phosphoribosyl)-5-[(5-phosphoribosylamino)methylideneamino] imidazole-4-carboxamide isomerase (248 aa).

Catalysis depends on aspartate 8, which acts as the Proton acceptor. Aspartate 131 acts as the Proton donor in catalysis.

It belongs to the HisA/HisF family.

The protein localises to the cytoplasm. It catalyses the reaction 1-(5-phospho-beta-D-ribosyl)-5-[(5-phospho-beta-D-ribosylamino)methylideneamino]imidazole-4-carboxamide = 5-[(5-phospho-1-deoxy-D-ribulos-1-ylimino)methylamino]-1-(5-phospho-beta-D-ribosyl)imidazole-4-carboxamide. The protein operates within amino-acid biosynthesis; L-histidine biosynthesis; L-histidine from 5-phospho-alpha-D-ribose 1-diphosphate: step 4/9. This Cupriavidus necator (strain ATCC 17699 / DSM 428 / KCTC 22496 / NCIMB 10442 / H16 / Stanier 337) (Ralstonia eutropha) protein is 1-(5-phosphoribosyl)-5-[(5-phosphoribosylamino)methylideneamino] imidazole-4-carboxamide isomerase.